We begin with the raw amino-acid sequence, 252 residues long: 3-dehydroquinate dehydratase (252 aa).

3-dehydroquinate contacts are provided by residues 46–48 (EWR) and Arg82. His143 (proton donor/acceptor) is an active-site residue. The active-site Schiff-base intermediate with substrate is the Lys170. 3 residues coordinate 3-dehydroquinate: Arg212, Ser231, and Gln235.

It belongs to the type-I 3-dehydroquinase family. In terms of assembly, homodimer.

The enzyme catalyses 3-dehydroquinate = 3-dehydroshikimate + H2O. Its pathway is metabolic intermediate biosynthesis; chorismate biosynthesis; chorismate from D-erythrose 4-phosphate and phosphoenolpyruvate: step 3/7. Involved in the third step of the chorismate pathway, which leads to the biosynthesis of aromatic amino acids. Catalyzes the cis-dehydration of 3-dehydroquinate (DHQ) and introduces the first double bond of the aromatic ring to yield 3-dehydroshikimate. The polypeptide is 3-dehydroquinate dehydratase (Listeria innocua serovar 6a (strain ATCC BAA-680 / CLIP 11262)).